We begin with the raw amino-acid sequence, 368 residues long: F-box/kelch-repeat protein At5g51250 (368 aa).

The F-box domain maps to 1 to 44 (MSSLPDDLLLSIFARISRLYYPTLSLVSKSFRSLLASPDLYKAR). Kelch repeat units follow at residues 116–163 (DIYN…VLDR), 165–218 (IYVA…CIDG), and 260–304 (LFYI…YGGK).

The chain is F-box/kelch-repeat protein At5g51250 from Arabidopsis thaliana (Mouse-ear cress).